The sequence spans 551 residues: MAAPALSWRLPLLILLLPLATSWASAAVNGTSQFTCFYNSRANISCVWSQDGALQDTSCQVHAWPDRRRWNQTCELLPVSQASWACNLILGAPDSQKLTTVDIVTLRVLCREGVRWRVMAIQDFKPFENLRLMAPISLQVVHVETHRCNISWEISQASHYFERHLEFEARTLSPGHTWEEAPLLTLKQKQEWICLETLTPDTQYEFQVRVKPLQGEFTTWSPWSQPLAFRTKPAALGKDTIPWLGHLLVGLSGAFGFIILVYLLINCRNTGPWLKKVLKCNTPDPSKFFSQLSSEHGGDVQKWLSSPFPSSSFSPGGLAPEISPLEVLERDKVTQLLLQQDKVPEPASLSSNHSLTSCFTNQGYFFFHLPDALEIEACQVYFTYDPYSEEDPDEGVAGAPTGSSPQPLQPLSGEDDAYCTFPSRDDLLLFSPSLLGGPSPPSTAPGGSGAGEERMPPSLQERVPRDWDPQPLGPPTPGVPDLVDFQPPPELVLREAGEEVPDAGPREGVSFPWSRPPGQGEFRALNARLPLNTDAYLSLQELQGQDPTHLV.

The signal sequence occupies residues 1–26 (MAAPALSWRLPLLILLLPLATSWASA). At 27 to 240 (AVNGTSQFTC…TKPAALGKDT (214 aa)) the chain is on the extracellular side. Residues Asn-29, Asn-43, and Asn-71 are each glycosylated (N-linked (GlcNAc...) asparagine). 3 cysteine pairs are disulfide-bonded: Cys-36-Cys-46, Cys-59-Cys-110, and Cys-74-Cys-86. The 101-residue stretch at 134 to 234 (APISLQVVHV…QPLAFRTKPA (101 aa)) folds into the Fibronectin type-III domain. N-linked (GlcNAc...) asparagine glycosylation is present at Asn-149. The short motif at 220-224 (WSPWS) is the WSXWS motif element. A helical membrane pass occupies residues 241–265 (IPWLGHLLVGLSGAFGFIILVYLLI). The Cytoplasmic portion of the chain corresponds to 266-551 (NCRNTGPWLK…LQGQDPTHLV (286 aa)). A Box 1 motif motif is present at residues 278–286 (LKCNTPDPS). Disordered regions lie at residues 389–416 (EEDPDEGVAGAPTGSSPQPLQPLSGEDD) and 432–486 (PSLL…VDFQ).

The protein belongs to the type I cytokine receptor family. Type 4 subfamily. Non-covalent dimer of an alpha and a beta subunit. IL2R exists in 3 different forms: a high affinity dimer, an intermediate affinity monomer (beta subunit), and a low affinity monomer (alpha subunit). The high and intermediate affinity forms also associate with a gamma subunit. Interacts with SHB upon interleukin stimulation. As to quaternary structure, (Microbial infection) Interacts with HTLV-1 accessory protein p12I.

It localises to the cell membrane. Receptor for interleukin-2. This beta subunit is involved in receptor mediated endocytosis and transduces the mitogenic signals of IL2. Probably in association with IL15RA, involved in the stimulation of neutrophil phagocytosis by IL15. In Homo sapiens (Human), this protein is Interleukin-2 receptor subunit beta.